A 138-amino-acid polypeptide reads, in one-letter code: ATP synthase epsilon chain (138 aa).

The protein belongs to the ATPase epsilon chain family. As to quaternary structure, F-type ATPases have 2 components, CF(1) - the catalytic core - and CF(0) - the membrane proton channel. CF(1) has five subunits: alpha(3), beta(3), gamma(1), delta(1), epsilon(1). CF(0) has three main subunits: a, b and c.

It localises to the cellular thylakoid membrane. In terms of biological role, produces ATP from ADP in the presence of a proton gradient across the membrane. In Cyanothece sp. (strain PCC 7425 / ATCC 29141), this protein is ATP synthase epsilon chain.